The chain runs to 542 residues: CTP synthase (542 aa).

The amidoligase domain stretch occupies residues Met1 to Ile265. Ser13 serves as a coordination point for CTP. Ser13 is a UTP binding site. Residues Ser14–Ile19 and Asp71 contribute to the ATP site. Residues Asp71 and Glu139 each contribute to the Mg(2+) site. Residues Asp146–Glu148, Lys186–Gln191, and Lys222 each bind CTP. UTP-binding positions include Lys186–Gln191 and Lys222. Residues Thr291–Leu541 enclose the Glutamine amidotransferase type-1 domain. Gly353 contacts L-glutamine. The active-site Nucleophile; for glutamine hydrolysis is Cys380. L-glutamine is bound by residues Phe381 to Gln384, Glu404, and Arg469. Catalysis depends on residues His514 and Glu516.

It belongs to the CTP synthase family. Homotetramer.

The catalysed reaction is UTP + L-glutamine + ATP + H2O = CTP + L-glutamate + ADP + phosphate + 2 H(+). It catalyses the reaction L-glutamine + H2O = L-glutamate + NH4(+). It carries out the reaction UTP + NH4(+) + ATP = CTP + ADP + phosphate + 2 H(+). Its pathway is pyrimidine metabolism; CTP biosynthesis via de novo pathway; CTP from UDP: step 2/2. Allosterically activated by GTP, when glutamine is the substrate; GTP has no effect on the reaction when ammonia is the substrate. The allosteric effector GTP functions by stabilizing the protein conformation that binds the tetrahedral intermediate(s) formed during glutamine hydrolysis. Inhibited by the product CTP, via allosteric rather than competitive inhibition. Functionally, catalyzes the ATP-dependent amination of UTP to CTP with either L-glutamine or ammonia as the source of nitrogen. Regulates intracellular CTP levels through interactions with the four ribonucleotide triphosphates. This chain is CTP synthase, found in Rhizobium johnstonii (strain DSM 114642 / LMG 32736 / 3841) (Rhizobium leguminosarum bv. viciae).